The chain runs to 449 residues: MSTSSAAVNGNHYEQLHQGRTKMYKSKVDVVLGAQWGDEGKGKVVDMLASEVDIVCRCQGGNNAGHTVVANGTEFDFHLLPSGVVNEKCISVIGNGVVIHLPSLFDELLKNQAKGLSHLENRLIISDRAHLVFDFHQHVDGMQEAEKGGKSLGTTKKGIGPAYSSKATRNGIRVGELLGDFNLFSDKFKSIVATHVRLFPSINVDVDAELARYKDYAEKVRPYVKDTICFLHTALRNGKTILVEGANAAMLDIDFGTYPYVTSSNCSIGGVLTGLGLPPQTIGEVIGVVKAYTTRVGDGPFPTEQLNEVGDLLQTRGFEVGVTTKRKRRCGWLDIPLLKYTSLVNGYTCICITKLDILDTMAEIKVAVGYKRSNGEKLDHFPGTIAELGSIEVEYANLPGWQTSTEHIRNFKELPENAQNYVRFLESELSVPVRWVGVGKGRESIINVH.

GTP contacts are provided by residues 37-43 (GDEGKGK) and 65-67 (GHT). The Proton acceptor role is filled by D38. The Mg(2+) site is built by D38 and G65. Residues 38–41 (DEGK), 63–66 (NAGH), T155, R169, N247, T262, and R326 each bind IMP. The active-site Proton donor is the H66. Residue 322–328 (VTTKRKR) participates in substrate binding. GTP contacts are provided by residues R328, 354–356 (KLD), and 437–439 (GVG).

This sequence belongs to the adenylosuccinate synthetase family. In terms of assembly, homodimer. Requires Mg(2+) as cofactor.

The protein resides in the cytoplasm. The catalysed reaction is IMP + L-aspartate + GTP = N(6)-(1,2-dicarboxyethyl)-AMP + GDP + phosphate + 2 H(+). Its pathway is purine metabolism; AMP biosynthesis via de novo pathway; AMP from IMP: step 1/2. Its function is as follows. Plays an important role in the de novo pathway and in the salvage pathway of purine nucleotide biosynthesis. Catalyzes the first committed step in the biosynthesis of AMP from IMP. The sequence is that of Adenylosuccinate synthetase from Drosophila willistoni (Fruit fly).